The primary structure comprises 208 residues: N-(5'-phosphoribosyl)anthranilate isomerase (208 aa).

Belongs to the TrpF family.

It catalyses the reaction N-(5-phospho-beta-D-ribosyl)anthranilate = 1-(2-carboxyphenylamino)-1-deoxy-D-ribulose 5-phosphate. It functions in the pathway amino-acid biosynthesis; L-tryptophan biosynthesis; L-tryptophan from chorismate: step 3/5. In Methanococcus maripaludis (strain C7 / ATCC BAA-1331), this protein is N-(5'-phosphoribosyl)anthranilate isomerase.